Reading from the N-terminus, the 237-residue chain is GCN5-related N-acetyltransferase 3, chloroplastic (237 aa).

The transit peptide at 1 to 93 (MGLVGCVGKS…RAISRSDVIV (93 aa)) directs the protein to the chloroplast. The 144-residue stretch at 94 to 237 (SVFCKPQHVD…TMMFTKSLEA (144 aa)) folds into the N-acetyltransferase domain. Residues 171-173 (LMV), 179-184 (RMGIGK), 207-209 (FED), and F214 each bind acetyl-CoA.

Belongs to the acetyltransferase family. GNAT subfamily. In terms of assembly, oligomer. Post-translationally, autoacetylated. As to expression, expressed in green tissues.

It localises to the plastid. The protein localises to the chloroplast. It catalyses the reaction an N-terminal L-alpha-aminoacyl-[protein] + acetyl-CoA = N-terminal N(alpha)-acetyl-L-alpha-aminoacyl-[protein] + CoA + H(+). It carries out the reaction L-lysyl-[protein] + acetyl-CoA = N(6)-acetyl-L-lysyl-[protein] + CoA + H(+). Functionally, protein acetyltransferase with dual specificity triggering both N-alpha-acetylation (NTA) and epsilon-lysine acetylation (KA), possibly with a low efficiency or toward specific plastid substrates. This Arabidopsis thaliana (Mouse-ear cress) protein is GCN5-related N-acetyltransferase 3, chloroplastic.